The chain runs to 72 residues: MKAELTAIIEAAEDGGYWAICPEIPGANGQGDTIAEAKASLKSAIQLIVEDRLEDIRRGLPEEAIEETILIP.

It belongs to the UPF0150 family.

The polypeptide is UPF0150 protein ssl0738 (Synechocystis sp. (strain ATCC 27184 / PCC 6803 / Kazusa)).